The sequence spans 89 residues: Small ribosomal subunit protein uS15 (89 aa).

It belongs to the universal ribosomal protein uS15 family. Part of the 30S ribosomal subunit. Forms a bridge to the 50S subunit in the 70S ribosome, contacting the 23S rRNA.

One of the primary rRNA binding proteins, it binds directly to 16S rRNA where it helps nucleate assembly of the platform of the 30S subunit by binding and bridging several RNA helices of the 16S rRNA. Functionally, forms an intersubunit bridge (bridge B4) with the 23S rRNA of the 50S subunit in the ribosome. This is Small ribosomal subunit protein uS15 from Aliivibrio fischeri (strain ATCC 700601 / ES114) (Vibrio fischeri).